The sequence spans 580 residues: Malto-oligosyltrehalose trehalohydrolase (580 aa).

Residues 56 to 88 (LPDPRSARQPDGVHARSQRWEPPGQFGAARTDT) form a disordered region. Over residues 60–69 (RSARQPDGVH) the composition is skewed to basic and acidic residues. Residue 245-250 (RLDAVH) coordinates substrate. D247 serves as the catalytic Nucleophile. Residue E284 is the Proton donor of the active site. Substrate contacts are provided by residues 309–313 (DDIHH) and 379–384 (HDQVGN).

This sequence belongs to the glycosyl hydrolase 13 family.

It localises to the cytoplasm. The catalysed reaction is hydrolysis of (1-&gt;4)-alpha-D-glucosidic linkage in 4-alpha-D-[(1-&gt;4)-alpha-D-glucanosyl]n trehalose to yield trehalose and (1-&gt;4)-alpha-D-glucan.. It functions in the pathway glycan biosynthesis; trehalose biosynthesis. Functionally, is involved in the biosynthesis of trehalose but not in that of capsular glucan and glycogen. This Mycobacterium tuberculosis (strain CDC 1551 / Oshkosh) protein is Malto-oligosyltrehalose trehalohydrolase (treZ).